The sequence spans 200 residues: Recombination protein RecR (200 aa).

The C4-type zinc-finger motif lies at 59–74; sequence CEKCNTFTEAQICEVC. Positions 82–177 constitute a Toprim domain; the sequence is ALLCVVETPA…AVTRLARGVP (96 aa).

This sequence belongs to the RecR family.

In terms of biological role, may play a role in DNA repair. It seems to be involved in an RecBC-independent recombinational process of DNA repair. It may act with RecF and RecO. The protein is Recombination protein RecR of Burkholderia mallei (strain NCTC 10247).